The following is a 159-amino-acid chain: Ribosomal RNA large subunit methyltransferase H (159 aa).

S-adenosyl-L-methionine contacts are provided by residues Leu-76, Gly-108, and 127-132 (FSKMTF).

It belongs to the RNA methyltransferase RlmH family. In terms of assembly, homodimer.

Its subcellular location is the cytoplasm. The catalysed reaction is pseudouridine(1915) in 23S rRNA + S-adenosyl-L-methionine = N(3)-methylpseudouridine(1915) in 23S rRNA + S-adenosyl-L-homocysteine + H(+). Its function is as follows. Specifically methylates the pseudouridine at position 1915 (m3Psi1915) in 23S rRNA. The chain is Ribosomal RNA large subunit methyltransferase H from Clostridium botulinum (strain 657 / Type Ba4).